Consider the following 239-residue polypeptide: 4-hydroxy-tetrahydrodipicolinate reductase (239 aa).

NAD(+) contacts are provided by residues 12–17 (GASGRM), 94–96 (GTT), and 118–121 (ASNF). The active-site Proton donor/acceptor is His150. His151 is a binding site for (S)-2,3,4,5-tetrahydrodipicolinate. The active-site Proton donor is the Lys154. 160–161 (GT) contributes to the (S)-2,3,4,5-tetrahydrodipicolinate binding site.

It belongs to the DapB family.

It is found in the cytoplasm. The enzyme catalyses (S)-2,3,4,5-tetrahydrodipicolinate + NAD(+) + H2O = (2S,4S)-4-hydroxy-2,3,4,5-tetrahydrodipicolinate + NADH + H(+). It carries out the reaction (S)-2,3,4,5-tetrahydrodipicolinate + NADP(+) + H2O = (2S,4S)-4-hydroxy-2,3,4,5-tetrahydrodipicolinate + NADPH + H(+). Its pathway is amino-acid biosynthesis; L-lysine biosynthesis via DAP pathway; (S)-tetrahydrodipicolinate from L-aspartate: step 4/4. Catalyzes the conversion of 4-hydroxy-tetrahydrodipicolinate (HTPA) to tetrahydrodipicolinate. The polypeptide is 4-hydroxy-tetrahydrodipicolinate reductase (Stenotrophomonas maltophilia (strain R551-3)).